The chain runs to 182 residues: Autophagy-related protein 31 (182 aa).

The tract at residues 105–134 is disordered; it reads LTSGNDTGGDAGKKSGDISDPAAGPDVPRE.

It is found in the cytoplasm. The protein resides in the cytoskeleton. Its subcellular location is the preautophagosomal structure. In terms of biological role, plays a role in starvation-induced autophagy. Involved in mitophagy. Functions with ATG17 and ATG29 at the preautophagosomal structure (PAS) in order to form normal autophagosomes under starvation conditions. May be involved in microtubule function, such as chromosome segregation and karyogamy. This Candida glabrata (strain ATCC 2001 / BCRC 20586 / JCM 3761 / NBRC 0622 / NRRL Y-65 / CBS 138) (Yeast) protein is Autophagy-related protein 31 (CIS1).